A 178-amino-acid chain; its full sequence is UPF0232 protein cgR_0005 (178 aa).

Residues A16–G55 form a disordered region.

The protein belongs to the UPF0232 family.

This Corynebacterium glutamicum (strain R) protein is UPF0232 protein cgR_0005.